The primary structure comprises 152 residues: Xanthine-guanine phosphoribosyltransferase (152 aa).

5-phospho-alpha-D-ribose 1-diphosphate contacts are provided by residues 37 to 38 (RG) and 88 to 96 (DDLVDTGGT). Residue aspartate 89 participates in Mg(2+) binding. Residues aspartate 92 and isoleucine 135 each contribute to the guanine site. Residues aspartate 92 and isoleucine 135 each contribute to the xanthine site. Residues 92–96 (DTGGT) and 134–135 (WI) each bind GMP.

It belongs to the purine/pyrimidine phosphoribosyltransferase family. XGPT subfamily. As to quaternary structure, homotetramer. Mg(2+) serves as cofactor.

Its subcellular location is the cell inner membrane. It catalyses the reaction GMP + diphosphate = guanine + 5-phospho-alpha-D-ribose 1-diphosphate. It carries out the reaction XMP + diphosphate = xanthine + 5-phospho-alpha-D-ribose 1-diphosphate. The catalysed reaction is IMP + diphosphate = hypoxanthine + 5-phospho-alpha-D-ribose 1-diphosphate. It participates in purine metabolism; GMP biosynthesis via salvage pathway; GMP from guanine: step 1/1. Its pathway is purine metabolism; XMP biosynthesis via salvage pathway; XMP from xanthine: step 1/1. Purine salvage pathway enzyme that catalyzes the transfer of the ribosyl-5-phosphate group from 5-phospho-alpha-D-ribose 1-diphosphate (PRPP) to the N9 position of the 6-oxopurines guanine and xanthine to form the corresponding ribonucleotides GMP (guanosine 5'-monophosphate) and XMP (xanthosine 5'-monophosphate), with the release of PPi. To a lesser extent, also acts on hypoxanthine. This Yersinia enterocolitica serotype O:8 / biotype 1B (strain NCTC 13174 / 8081) protein is Xanthine-guanine phosphoribosyltransferase.